Reading from the N-terminus, the 341-residue chain is L-threonine 3-dehydrogenase (341 aa).

Residue C38 coordinates Zn(2+). Residues T40 and H43 each act as charge relay system in the active site. Positions 63, 64, 93, 96, 99, and 107 each coordinate Zn(2+). Residues I175, D195, R200, 262 to 264 (LGI), and 286 to 287 (IY) contribute to the NAD(+) site.

It belongs to the zinc-containing alcohol dehydrogenase family. Homotetramer. Requires Zn(2+) as cofactor.

Its subcellular location is the cytoplasm. The enzyme catalyses L-threonine + NAD(+) = (2S)-2-amino-3-oxobutanoate + NADH + H(+). It functions in the pathway amino-acid degradation; L-threonine degradation via oxydo-reductase pathway; glycine from L-threonine: step 1/2. In terms of biological role, catalyzes the NAD(+)-dependent oxidation of L-threonine to 2-amino-3-ketobutyrate. The protein is L-threonine 3-dehydrogenase of Klebsiella pneumoniae (strain 342).